The primary structure comprises 206 residues: 3-isopropylmalate dehydratase small subunit (206 aa).

It belongs to the LeuD family. LeuD type 1 subfamily. As to quaternary structure, heterodimer of LeuC and LeuD.

It carries out the reaction (2R,3S)-3-isopropylmalate = (2S)-2-isopropylmalate. The protein operates within amino-acid biosynthesis; L-leucine biosynthesis; L-leucine from 3-methyl-2-oxobutanoate: step 2/4. Functionally, catalyzes the isomerization between 2-isopropylmalate and 3-isopropylmalate, via the formation of 2-isopropylmaleate. The polypeptide is 3-isopropylmalate dehydratase small subunit (Acidobacterium capsulatum (strain ATCC 51196 / DSM 11244 / BCRC 80197 / JCM 7670 / NBRC 15755 / NCIMB 13165 / 161)).